The sequence spans 430 residues: Serine--tRNA ligase (430 aa).

The segment at Thr-44 to Gly-65 is disordered. Thr-237–Glu-239 contributes to the L-serine binding site. An ATP-binding site is contributed by Arg-268 to Glu-270. Residue Glu-291 coordinates L-serine. Glu-355–Ser-358 is an ATP binding site. Ser-391 provides a ligand contact to L-serine.

Belongs to the class-II aminoacyl-tRNA synthetase family. Type-1 seryl-tRNA synthetase subfamily. Homodimer. The tRNA molecule binds across the dimer.

Its subcellular location is the cytoplasm. It carries out the reaction tRNA(Ser) + L-serine + ATP = L-seryl-tRNA(Ser) + AMP + diphosphate + H(+). The catalysed reaction is tRNA(Sec) + L-serine + ATP = L-seryl-tRNA(Sec) + AMP + diphosphate + H(+). It participates in aminoacyl-tRNA biosynthesis; selenocysteinyl-tRNA(Sec) biosynthesis; L-seryl-tRNA(Sec) from L-serine and tRNA(Sec): step 1/1. In terms of biological role, catalyzes the attachment of serine to tRNA(Ser). Is also able to aminoacylate tRNA(Sec) with serine, to form the misacylated tRNA L-seryl-tRNA(Sec), which will be further converted into selenocysteinyl-tRNA(Sec). The protein is Serine--tRNA ligase of Edwardsiella ictaluri (strain 93-146).